We begin with the raw amino-acid sequence, 465 residues long: Pancreatic triacylglycerol lipase (465 aa).

An N-terminal signal peptide occupies residues 1-16 (MLPLWTLSLLLGAVAG). 2 disulfides stabilise this stretch: C20-C26 and C107-C118. The Nucleophile role is filled by S169. N183 is a glycosylation site (N-linked (GlcNAc...) asparagine). D193 acts as the Charge relay system in catalysis. Residues E204, R207, D209, and D212 each contribute to the Ca(2+) site. C254 and C278 form a disulfide bridge. Residue H280 is the Charge relay system of the active site. Disulfide bonds link C302-C313, C316-C321, and C449-C465. The 111-residue stretch at 355–465 (WRYKVSVTLS…EEVLLTLTPC (111 aa)) folds into the PLAT domain.

Belongs to the AB hydrolase superfamily. Lipase family. Forms a 1:1 stoichiometric complex with (pro)colipase/CLPS.

The protein resides in the secreted. It catalyses the reaction a triacylglycerol + H2O = a diacylglycerol + a fatty acid + H(+). It carries out the reaction 1,2,3-tributanoylglycerol + H2O = dibutanoylglycerol + butanoate + H(+). The enzyme catalyses 1,2,3-tri-(9Z-octadecenoyl)-glycerol + H2O = di-(9Z)-octadecenoylglycerol + (9Z)-octadecenoate + H(+). The catalysed reaction is all-trans-retinyl hexadecanoate + H2O = all-trans-retinol + hexadecanoate + H(+). It catalyses the reaction 1,2-di-(9Z-octadecenoyl)-glycerol + H2O = (9Z-octadecenoyl)-glycerol + (9Z)-octadecenoate + H(+). With respect to regulation, inhibited by bile salts, is reactivated by (pro)colipase/CLPS. Its function is as follows. Plays an important role in fat metabolism. It preferentially splits the esters of long-chain fatty acids at positions 1 and 3, producing mainly 2-monoacylglycerol and free fatty acids, and shows considerably higher activity against insoluble emulsified substrates than against soluble ones. The protein is Pancreatic triacylglycerol lipase of Homo sapiens (Human).